The primary structure comprises 99 residues: Acylphosphatase (99 aa).

Residues 5–97 form the Acylphosphatase-like domain; the sequence is ILQVMIRGRV…RAGEKFSVLP (93 aa). Active-site residues include R20 and N38.

It belongs to the acylphosphatase family.

The catalysed reaction is an acyl phosphate + H2O = a carboxylate + phosphate + H(+). This chain is Acylphosphatase (acyP), found in Bradyrhizobium diazoefficiens (strain JCM 10833 / BCRC 13528 / IAM 13628 / NBRC 14792 / USDA 110).